The chain runs to 345 residues: Phosphoribosylformylglycinamidine cyclo-ligase (345 aa).

The protein belongs to the AIR synthase family.

The protein localises to the cytoplasm. It carries out the reaction 2-formamido-N(1)-(5-O-phospho-beta-D-ribosyl)acetamidine + ATP = 5-amino-1-(5-phospho-beta-D-ribosyl)imidazole + ADP + phosphate + H(+). Its pathway is purine metabolism; IMP biosynthesis via de novo pathway; 5-amino-1-(5-phospho-D-ribosyl)imidazole from N(2)-formyl-N(1)-(5-phospho-D-ribosyl)glycinamide: step 2/2. The protein is Phosphoribosylformylglycinamidine cyclo-ligase of Shewanella sediminis (strain HAW-EB3).